Here is a 289-residue protein sequence, read N- to C-terminus: Acetyl-coenzyme A carboxylase carboxyl transferase subunit beta (289 aa).

The region spanning 28-289 (VMTKCPKCKK…QGGEMAVWQS (262 aa)) is the CoA carboxyltransferase N-terminal domain. The Zn(2+) site is built by C32, C35, C51, and C54. A C4-type zinc finger spans residues 32-54 (CPKCKKIMYTKEVLKNLKVCVNC).

This sequence belongs to the AccD/PCCB family. As to quaternary structure, acetyl-CoA carboxylase is a heterohexamer composed of biotin carboxyl carrier protein (AccB), biotin carboxylase (AccC) and two subunits each of ACCase subunit alpha (AccA) and ACCase subunit beta (AccD). It depends on Zn(2+) as a cofactor.

It localises to the cytoplasm. It carries out the reaction N(6)-carboxybiotinyl-L-lysyl-[protein] + acetyl-CoA = N(6)-biotinyl-L-lysyl-[protein] + malonyl-CoA. Its pathway is lipid metabolism; malonyl-CoA biosynthesis; malonyl-CoA from acetyl-CoA: step 1/1. Functionally, component of the acetyl coenzyme A carboxylase (ACC) complex. Biotin carboxylase (BC) catalyzes the carboxylation of biotin on its carrier protein (BCCP) and then the CO(2) group is transferred by the transcarboxylase to acetyl-CoA to form malonyl-CoA. The sequence is that of Acetyl-coenzyme A carboxylase carboxyl transferase subunit beta from Bacillus anthracis (strain A0248).